The sequence spans 324 residues: Leucine carboxyl methyltransferase 1 (324 aa).

S-adenosyl-L-methionine is bound by residues Arg-74, Gly-101, Asp-128, 172–173 (DL), and Glu-196.

Belongs to the methyltransferase superfamily. LCMT family.

The enzyme catalyses [phosphatase 2A protein]-C-terminal L-leucine + S-adenosyl-L-methionine = [phosphatase 2A protein]-C-terminal L-leucine methyl ester + S-adenosyl-L-homocysteine. Its function is as follows. Methylates the carboxyl group of the C-terminal leucine residue of protein phosphatase 2A catalytic subunits to form alpha-leucine ester residues. This is Leucine carboxyl methyltransferase 1 (PPM1) from Yarrowia lipolytica (strain CLIB 122 / E 150) (Yeast).